A 290-amino-acid chain; its full sequence is 33 kDa chaperonin (290 aa).

Intrachain disulfides connect C236-C238 and C269-C272.

This sequence belongs to the HSP33 family. Post-translationally, under oxidizing conditions two disulfide bonds are formed involving the reactive cysteines. Under reducing conditions zinc is bound to the reactive cysteines and the protein is inactive.

The protein localises to the cytoplasm. Redox regulated molecular chaperone. Protects both thermally unfolding and oxidatively damaged proteins from irreversible aggregation. Plays an important role in the bacterial defense system toward oxidative stress. The chain is 33 kDa chaperonin from Acholeplasma laidlawii (strain PG-8A).